The following is a 382-amino-acid chain: Galactokinase (382 aa).

34–37 provides a ligand contact to substrate; that stretch reads EHTD. 124–130 contributes to the ATP binding site; the sequence is GAGLSSS. Mg(2+)-binding residues include Ser130 and Glu162. Residue Asp174 is the Proton acceptor of the active site. Tyr223 contacts substrate.

This sequence belongs to the GHMP kinase family. GalK subfamily.

It is found in the cytoplasm. The enzyme catalyses alpha-D-galactose + ATP = alpha-D-galactose 1-phosphate + ADP + H(+). It functions in the pathway carbohydrate metabolism; galactose metabolism. In terms of biological role, catalyzes the transfer of the gamma-phosphate of ATP to D-galactose to form alpha-D-galactose-1-phosphate (Gal-1-P). This Salmonella paratyphi B (strain ATCC BAA-1250 / SPB7) protein is Galactokinase.